The following is a 97-amino-acid chain: Aspartyl/glutamyl-tRNA(Asn/Gln) amidotransferase subunit C (97 aa).

Residues 58 to 78 (LPQGRLRKDTPRDPLDRENAL) form a disordered region. The segment covering 63–77 (LRKDTPRDPLDRENA) has biased composition (basic and acidic residues).

The protein belongs to the GatC family. As to quaternary structure, heterotrimer of A, B and C subunits.

The enzyme catalyses L-glutamyl-tRNA(Gln) + L-glutamine + ATP + H2O = L-glutaminyl-tRNA(Gln) + L-glutamate + ADP + phosphate + H(+). It carries out the reaction L-aspartyl-tRNA(Asn) + L-glutamine + ATP + H2O = L-asparaginyl-tRNA(Asn) + L-glutamate + ADP + phosphate + 2 H(+). Functionally, allows the formation of correctly charged Asn-tRNA(Asn) or Gln-tRNA(Gln) through the transamidation of misacylated Asp-tRNA(Asn) or Glu-tRNA(Gln) in organisms which lack either or both of asparaginyl-tRNA or glutaminyl-tRNA synthetases. The reaction takes place in the presence of glutamine and ATP through an activated phospho-Asp-tRNA(Asn) or phospho-Glu-tRNA(Gln). The polypeptide is Aspartyl/glutamyl-tRNA(Asn/Gln) amidotransferase subunit C (Saccharolobus islandicus (strain Y.N.15.51 / Yellowstone #2) (Sulfolobus islandicus)).